The following is a 921-amino-acid chain: Isoleucine--tRNA ligase 1 (921 aa).

A 'HIGH' region motif is present at residues 57 to 67 (PYANGDIHMGH). Glu552 serves as a coordination point for L-isoleucyl-5'-AMP. The 'KMSKS' region motif lies at 593-597 (KMSKS). ATP is bound at residue Lys596. Zn(2+) is bound by residues Cys888, Cys891, Cys908, and Cys911.

Belongs to the class-I aminoacyl-tRNA synthetase family. IleS type 1 subfamily. As to quaternary structure, monomer. Zn(2+) is required as a cofactor.

It is found in the cytoplasm. The catalysed reaction is tRNA(Ile) + L-isoleucine + ATP = L-isoleucyl-tRNA(Ile) + AMP + diphosphate. Functionally, catalyzes the attachment of isoleucine to tRNA(Ile). As IleRS can inadvertently accommodate and process structurally similar amino acids such as valine, to avoid such errors it has two additional distinct tRNA(Ile)-dependent editing activities. One activity is designated as 'pretransfer' editing and involves the hydrolysis of activated Val-AMP. The other activity is designated 'posttransfer' editing and involves deacylation of mischarged Val-tRNA(Ile). This Bacillus thuringiensis subsp. konkukian (strain 97-27) protein is Isoleucine--tRNA ligase 1.